The sequence spans 37 residues: MNFCFFTLFPSSITELSQMNLVSQTHFCYIGRITTHT.

This is an uncharacterized protein from Saccharomyces cerevisiae (strain ATCC 204508 / S288c) (Baker's yeast).